The chain runs to 163 residues: Glutathione peroxidase 2 (163 aa).

Cys36 is a catalytic residue.

It belongs to the glutathione peroxidase family.

It localises to the cytoplasm. It catalyses the reaction 2 glutathione + H2O2 = glutathione disulfide + 2 H2O. May constitute a glutathione peroxidase-like protective system against oxidative stresses. This is Glutathione peroxidase 2 (gpx-2) from Caenorhabditis elegans.